The following is a 250-amino-acid chain: Isoprenyl transferase (250 aa).

D26 is a catalytic residue. D26 contributes to the Mg(2+) binding site. Substrate is bound by residues 27 to 30, W31, R39, H43, and 71 to 73; these read GNGR and STE. Residue N74 is the Proton acceptor of the active site. Residues W75, R77, R198, and 204–206 contribute to the substrate site; that span reads RLS. E217 is a Mg(2+) binding site.

Belongs to the UPP synthase family. As to quaternary structure, homodimer. Requires Mg(2+) as cofactor.

In terms of biological role, catalyzes the condensation of isopentenyl diphosphate (IPP) with allylic pyrophosphates generating different type of terpenoids. The chain is Isoprenyl transferase from Streptococcus agalactiae serotype V (strain ATCC BAA-611 / 2603 V/R).